We begin with the raw amino-acid sequence, 240 residues long: Ribose-5-phosphate isomerase (240 aa).

Substrate contacts are provided by residues 34–37 (SGST), 88–91 (DGAD), and 101–104 (KGGG). Residue Glu110 is the Proton acceptor of the active site. Position 128 (Lys128) interacts with substrate.

It belongs to the ribose 5-phosphate isomerase family.

It localises to the cytoplasm. The catalysed reaction is aldehydo-D-ribose 5-phosphate = D-ribulose 5-phosphate. It participates in carbohydrate degradation; pentose phosphate pathway; D-ribose 5-phosphate from D-ribulose 5-phosphate (non-oxidative stage): step 1/1. Involved in the first step of the non-oxidative branch of the pentose phosphate pathway. It catalyzes the reversible conversion of ribose-5-phosphate to ribulose 5-phosphate. The chain is Ribose-5-phosphate isomerase (RKI1) from Candida albicans (strain SC5314 / ATCC MYA-2876) (Yeast).